Reading from the N-terminus, the 236-residue chain is Leucyl/phenylalanyl-tRNA--protein transferase (236 aa).

The protein belongs to the L/F-transferase family.

It is found in the cytoplasm. The catalysed reaction is N-terminal L-lysyl-[protein] + L-leucyl-tRNA(Leu) = N-terminal L-leucyl-L-lysyl-[protein] + tRNA(Leu) + H(+). It catalyses the reaction N-terminal L-arginyl-[protein] + L-leucyl-tRNA(Leu) = N-terminal L-leucyl-L-arginyl-[protein] + tRNA(Leu) + H(+). The enzyme catalyses L-phenylalanyl-tRNA(Phe) + an N-terminal L-alpha-aminoacyl-[protein] = an N-terminal L-phenylalanyl-L-alpha-aminoacyl-[protein] + tRNA(Phe). Functions in the N-end rule pathway of protein degradation where it conjugates Leu, Phe and, less efficiently, Met from aminoacyl-tRNAs to the N-termini of proteins containing an N-terminal arginine or lysine. This chain is Leucyl/phenylalanyl-tRNA--protein transferase, found in Vibrio campbellii (strain ATCC BAA-1116).